The chain runs to 288 residues: MIMAALPFKLFASIQYLLPQHGLSRFVHWAVRIRQPWFKNALIRAFCRFYRVDLAESVCSSPESFECFNAFFTRALKPGVRSVCSEPDAIACPADGMISQLGAIKGTRLFQAKGRCFELAELLGGDRSRTEAFENGSFVTVYLSPRDYHRVHMPVAGTLAAMTHVPGALFSVNVATTENVPNLFARNERLICYFDTAGGPMAVILVGAIFVSSIETVWHGEVTPPRSKTIRRWDYSGQGLRFERGAEIGRFNMGSTVIVLFGPGHARWRAGIGAGMSVKMGLSLGSCR.

Catalysis depends on charge relay system; for autoendoproteolytic cleavage activity residues Asp95, His152, and Ser255. The active-site Schiff-base intermediate with substrate; via pyruvic acid; for decarboxylase activity is the Ser255. Ser255 bears the Pyruvic acid (Ser); by autocatalysis mark.

It belongs to the phosphatidylserine decarboxylase family. PSD-B subfamily. Prokaryotic type I sub-subfamily. In terms of assembly, heterodimer of a large membrane-associated beta subunit and a small pyruvoyl-containing alpha subunit. The cofactor is pyruvate. In terms of processing, is synthesized initially as an inactive proenzyme. Formation of the active enzyme involves a self-maturation process in which the active site pyruvoyl group is generated from an internal serine residue via an autocatalytic post-translational modification. Two non-identical subunits are generated from the proenzyme in this reaction, and the pyruvate is formed at the N-terminus of the alpha chain, which is derived from the carboxyl end of the proenzyme. The autoendoproteolytic cleavage occurs by a canonical serine protease mechanism, in which the side chain hydroxyl group of the serine supplies its oxygen atom to form the C-terminus of the beta chain, while the remainder of the serine residue undergoes an oxidative deamination to produce ammonia and the pyruvoyl prosthetic group on the alpha chain. During this reaction, the Ser that is part of the protease active site of the proenzyme becomes the pyruvoyl prosthetic group, which constitutes an essential element of the active site of the mature decarboxylase.

The protein localises to the cell membrane. It carries out the reaction a 1,2-diacyl-sn-glycero-3-phospho-L-serine + H(+) = a 1,2-diacyl-sn-glycero-3-phosphoethanolamine + CO2. Its pathway is phospholipid metabolism; phosphatidylethanolamine biosynthesis; phosphatidylethanolamine from CDP-diacylglycerol: step 2/2. In terms of biological role, catalyzes the formation of phosphatidylethanolamine (PtdEtn) from phosphatidylserine (PtdSer). The polypeptide is Phosphatidylserine decarboxylase proenzyme (Methylococcus capsulatus (strain ATCC 33009 / NCIMB 11132 / Bath)).